We begin with the raw amino-acid sequence, 208 residues long: MAEIVLNVEVRERTGTGGARDTRRSGMVPGVLYGGDKDPVAIAVRANEFRKALYTGKLLGHLVTLKYGNETQPVIAKAVDMHPVTDEPQHFDLYRVDEHQQIKIEVPVHFTNQDDSPGLKRGGTLNVALHTLTVSCPADSIPEEIVFDLTGLEIGATIRVADLKLPAKAEAAVDGETVVASVAGAMAEVAEEAAEGAEGEAAAEGGEE.

The protein belongs to the bacterial ribosomal protein bL25 family. CTC subfamily. As to quaternary structure, part of the 50S ribosomal subunit; part of the 5S rRNA/L5/L18/L25 subcomplex. Contacts the 5S rRNA. Binds to the 5S rRNA independently of L5 and L18.

Functionally, this is one of the proteins that binds to the 5S RNA in the ribosome where it forms part of the central protuberance. The sequence is that of Large ribosomal subunit protein bL25 from Phenylobacterium zucineum (strain HLK1).